Consider the following 92-residue polypeptide: Small ribosomal subunit protein uS19 (92 aa).

It belongs to the universal ribosomal protein uS19 family.

In terms of biological role, protein S19 forms a complex with S13 that binds strongly to the 16S ribosomal RNA. This Albidiferax ferrireducens (strain ATCC BAA-621 / DSM 15236 / T118) (Rhodoferax ferrireducens) protein is Small ribosomal subunit protein uS19.